The sequence spans 530 residues: Bifunctional purine biosynthesis protein PurH (530 aa).

The 148-residue stretch at 1–148 (MNNARPIRRA…KNHKDVTIVV (148 aa)) folds into the MGS-like domain.

Belongs to the PurH family.

The enzyme catalyses (6R)-10-formyltetrahydrofolate + 5-amino-1-(5-phospho-beta-D-ribosyl)imidazole-4-carboxamide = 5-formamido-1-(5-phospho-D-ribosyl)imidazole-4-carboxamide + (6S)-5,6,7,8-tetrahydrofolate. The catalysed reaction is IMP + H2O = 5-formamido-1-(5-phospho-D-ribosyl)imidazole-4-carboxamide. Its pathway is purine metabolism; IMP biosynthesis via de novo pathway; 5-formamido-1-(5-phospho-D-ribosyl)imidazole-4-carboxamide from 5-amino-1-(5-phospho-D-ribosyl)imidazole-4-carboxamide (10-formyl THF route): step 1/1. It participates in purine metabolism; IMP biosynthesis via de novo pathway; IMP from 5-formamido-1-(5-phospho-D-ribosyl)imidazole-4-carboxamide: step 1/1. The polypeptide is Bifunctional purine biosynthesis protein PurH (Vibrio campbellii (strain ATCC BAA-1116)).